A 114-amino-acid polypeptide reads, in one-letter code: ATP synthase epsilon chain (114 aa).

The protein belongs to the ATPase epsilon chain family. In terms of assembly, F-type ATPases have 2 components, CF(1) - the catalytic core - and CF(0) - the membrane proton channel. CF(1) has five subunits: alpha(3), beta(3), gamma(1), delta(1), epsilon(1). CF(0) has three main subunits: a, b and c.

It is found in the cell membrane. Functionally, produces ATP from ADP in the presence of a proton gradient across the membrane. This Wolbachia pipientis wMel protein is ATP synthase epsilon chain.